Reading from the N-terminus, the 623-residue chain is NAD-dependent malic enzyme 1, mitochondrial (623 aa).

The N-terminal 38 residues, 1 to 38, are a transit peptide targeting the mitochondrion; it reads MGIANKLRLSSSSLSRILHRRILYSSAVRSFTTSEGHR. Tyr-143 (proton donor) is an active-site residue. Position 196 (Arg-196) interacts with NAD(+). Lys-214 (proton acceptor) is an active-site residue. A divalent metal cation contacts are provided by Glu-285, Asp-286, and Asp-309. NAD(+) is bound by residues Asp-309 and Asn-464.

Belongs to the malic enzymes family. As to quaternary structure, homodimer. Heterodimer of two related subunits in NAD-MEH complex. Interacts with NAD-ME2. The cofactor is Mg(2+). Mn(2+) is required as a cofactor. As to expression, expressed in leaves, stems, flowers, and roots (at protein level).

It is found in the mitochondrion. It catalyses the reaction (S)-malate + NAD(+) = pyruvate + CO2 + NADH. Its activity is regulated as follows. Activated by oxaloacetate (OAA), 2-ketoglutarate, succinate and fumarate as homodimer and by OAA, 2-ketoglutarate, succinate, fumarate and coenzyme A (acetyl-CoA and CoA) as heterodimer NAD-MEH. Its function is as follows. Involved in the regulation of sugars and amino acids metabolisms during the night period. The polypeptide is NAD-dependent malic enzyme 1, mitochondrial (NAD-ME1) (Arabidopsis thaliana (Mouse-ear cress)).